The following is a 270-amino-acid chain: NAD kinase (270 aa).

The Proton acceptor role is filled by D49. Residues 49–50 (DG), R54, 126–127 (NE), R152, D154, 165–170 (TAYNKS), A189, and Q227 contribute to the NAD(+) site.

This sequence belongs to the NAD kinase family. A divalent metal cation serves as cofactor.

It is found in the cytoplasm. It carries out the reaction NAD(+) + ATP = ADP + NADP(+) + H(+). Involved in the regulation of the intracellular balance of NAD and NADP, and is a key enzyme in the biosynthesis of NADP. Catalyzes specifically the phosphorylation on 2'-hydroxyl of the adenosine moiety of NAD to yield NADP. The sequence is that of NAD kinase from Lactococcus lactis subsp. cremoris (strain MG1363).